We begin with the raw amino-acid sequence, 3393 residues long: Genome polyprotein (3393 aa).

Topologically, residues M1–S91 are cytoplasmic. Residues V28–S60 form a hydrophobic; homodimerization of capsid protein C region. The propeptide at S91–A108 is ER anchor for the capsid protein C, removed in mature form by serine protease NS3. The chain crosses the membrane as a helical span at residues A92–A112. Residues R113–K231 are Extracellular-facing. N-linked (GlcNAc...) asparagine; by host glycans are attached at residues N121 and N137. Residues W232 to N252 form a helical membrane-spanning segment. The Cytoplasmic segment spans residues S253 to R257. The chain crosses the membrane as a helical span at residues V258–A272. The Extracellular portion of the chain corresponds to T273–H713. Cystine bridges form between C275-C302, C346-C377, C364-C388, C453-C553, and C570-C600. The fusion peptide stretch occupies residues D370–G383. The helical transmembrane segment at G714–L734 threads the bilayer. Topologically, residues G735 to T745 are cytoplasmic. Residues L746–A763 form a helical membrane-spanning segment. Residues E764–W1112 lie on the Extracellular side of the membrane. Cystine bridges form between C767/C778, C818/C905, C941/C986, C1043/C1092, C1054/C1075, C1054/C1076, C1075/C1079, and C1076/C1079. N-linked (GlcNAc...) asparagine; by host glycans are attached at residues N893 and N970. A helical membrane pass occupies residues V1113–V1133. Topologically, residues D1134–D1186 are cytoplasmic. The helical transmembrane segment at V1187–F1207 threads the bilayer. Over A1208 to A1283 the chain is Lumenal. Residues S1284 to M1304 traverse the membrane as a helical segment. Residues R1305 to T1341 lie on the Cytoplasmic side of the membrane. A helical transmembrane segment spans residues W1342–F1362. The Lumenal segment spans residues S1363–D1365. The helical transmembrane segment at E1366–T1386 threads the bilayer. At Q1387 to S1438 the chain is on the cytoplasmic side. The segment at L1393–V1432 is interacts with and activates NS3 protease. The helical intramembrane region spans F1439–V1459. The Cytoplasmic segment spans residues A1460–A2137. The region spanning S1470 to T1649 is the Peptidase S7 domain. Active-site charge relay system; for serine protease NS3 activity residues include H1521, D1545, and S1606. The 157-residue stretch at D1653–K1809 folds into the Helicase ATP-binding domain. The tract at residues R1657 to E1660 is important for RNA-binding. ATP is bound at residue Y1666–T1673. A DEAH box motif is present at residues D1757 to H1760. A Helicase C-terminal domain is found at E1804–S1984. The helical transmembrane segment at V2138–L2158 threads the bilayer. Residues M2159–S2168 lie on the Lumenal side of the membrane. An intramembrane region (helical) is located at residues M2169–G2184. A topological domain (lumenal) is located at residue G2185. The chain crosses the membrane as a helical span at residues M2186–I2206. Residues P2207–A2221 are Cytoplasmic-facing. A helical transmembrane segment spans residues Y2222–C2236. Residues N2237–G2275 lie on the Lumenal side of the membrane. Positions A2276–I2296 form an intramembrane region, helical. Over K2297 to T2344 the chain is Lumenal. Residues S2345–V2365 form a helical membrane-spanning segment. The Cytoplasmic segment spans residues R2366–K2408. Residues L2409–L2429 form a helical membrane-spanning segment. At T2430 to P2457 the chain is on the lumenal side. A helical membrane pass occupies residues L2458–Y2478. Residues N2479–L3393 lie on the Cytoplasmic side of the membrane. Residues G2489–S2753 enclose the mRNA cap 0-1 NS5-type MT domain. Position 2544 (S2544) interacts with S-adenosyl-L-methionine. A Phosphoserine modification is found at S2544. Residue K2549 is the For 2'-O-MTase activity of the active site. Positions 2574, 2575, 2592, 2593, 2619, and 2620 each coordinate S-adenosyl-L-methionine. The active-site For 2'-O-MTase activity is the D2634. An S-adenosyl-L-methionine-binding site is contributed by I2635. Active-site for 2'-O-MTase activity residues include K2670 and E2706. Residue Y2708 participates in S-adenosyl-L-methionine binding. The Nuclear localization signal motif lies at R2860–R2893. Zn(2+) is bound by residues E2927, H2931, C2936, and C2939. Residues G3017–A3169 enclose the RdRp catalytic domain. Residues H3204, C3220, and C3339 each contribute to the Zn(2+) site.

In the N-terminal section; belongs to the class I-like SAM-binding methyltransferase superfamily. mRNA cap 0-1 NS5-type methyltransferase family. As to quaternary structure, homodimer. Interacts (via N-terminus) with host EXOC1 (via C-terminus); this interaction results in EXOC1 degradation through the proteasome degradation pathway. Forms heterodimers with envelope protein E in the endoplasmic reticulum and Golgi. In terms of assembly, homodimer; in the endoplasmic reticulum and Golgi. Interacts with protein prM. Interacts with non-structural protein 1. As to quaternary structure, homodimer; Homohexamer when secreted. Interacts with envelope protein E. Interacts (via N-terminus) with serine protease NS3. In terms of assembly, forms a heterodimer with serine protease NS3. May form homooligomers. As to quaternary structure, forms a heterodimer with NS2B. Interacts with non-structural protein 2A (via N-terminus). Interacts with NS4B. Interacts with unphosphorylated RNA-directed RNA polymerase NS5; this interaction stimulates RNA-directed RNA polymerase NS5 guanylyltransferase activity. NS3 interacts with host PDCD6IP; this interaction contributes to virion release. Interacts with serine protease NS3. In terms of assembly, homodimer. Interacts with host STAT2; this interaction prevents the establishment of cellular antiviral state. Interacts with host TRIM23; this interaction leads to NS5 ubiquitination. In terms of processing, specific enzymatic cleavages in vivo yield mature proteins. The nascent capsid protein C contains a C-terminal hydrophobic domain that act as a signal sequence for translocation of prM into the lumen of the ER. Mature capsid protein C is cleaved at a site upstream of this hydrophobic domain by NS3. prM is cleaved in post-Golgi vesicles by a host furin, releasing the mature small envelope protein M, and peptide pr. Non-structural protein 2A-alpha, a C-terminally truncated form of non-structural protein 2A, results from partial cleavage by NS3. Specific enzymatic cleavages in vivo yield mature proteins peptide 2K acts as a signal sequence and is removed from the N-terminus of NS4B by the host signal peptidase in the ER lumen. Signal cleavage at the 2K-4B site requires a prior NS3 protease-mediated cleavage at the 4A-2K site. Post-translationally, cleaved in post-Golgi vesicles by a host furin, releasing the mature small envelope protein M, and peptide pr. This cleavage is incomplete as up to 30% of viral particles still carry uncleaved prM. N-glycosylated. In terms of processing, N-glycosylated. The excreted form is glycosylated and this is required for efficient secretion of the protein from infected cells. Post-translationally, polyubiquitinated; ubiquitination is probably mediated by host TRIM23 and is prerequisite for NS5-STAT2 interaction. NS5 is not ISGylated or sumoylated. Phosphorylated on serines residues. This phosphorylation may trigger NS5 nuclear localization.

The protein resides in the virion. It is found in the host nucleus. Its subcellular location is the host cytoplasm. It localises to the host perinuclear region. The protein localises to the secreted. The protein resides in the virion membrane. It is found in the host endoplasmic reticulum membrane. The catalysed reaction is Selective hydrolysis of -Xaa-Xaa-|-Yaa- bonds in which each of the Xaa can be either Arg or Lys and Yaa can be either Ser or Ala.. The enzyme catalyses RNA(n) + a ribonucleoside 5'-triphosphate = RNA(n+1) + diphosphate. It catalyses the reaction a ribonucleoside 5'-triphosphate + H2O = a ribonucleoside 5'-diphosphate + phosphate + H(+). It carries out the reaction ATP + H2O = ADP + phosphate + H(+). The catalysed reaction is a 5'-end (5'-triphosphoguanosine)-ribonucleoside in mRNA + S-adenosyl-L-methionine = a 5'-end (N(7)-methyl 5'-triphosphoguanosine)-ribonucleoside in mRNA + S-adenosyl-L-homocysteine. The enzyme catalyses a 5'-end (N(7)-methyl 5'-triphosphoguanosine)-ribonucleoside in mRNA + S-adenosyl-L-methionine = a 5'-end (N(7)-methyl 5'-triphosphoguanosine)-(2'-O-methyl-ribonucleoside) in mRNA + S-adenosyl-L-homocysteine + H(+). Plays a role in virus budding by binding to the cell membrane and gathering the viral RNA into a nucleocapsid that forms the core of a mature virus particle. During virus entry, may induce genome penetration into the host cytoplasm after hemifusion induced by the surface proteins. Can migrate to the cell nucleus where it modulates host functions. Functionally, inhibits RNA silencing by interfering with host Dicer. Its function is as follows. Prevents premature fusion activity of envelope proteins in trans-Golgi by binding to envelope protein E at pH6.0. After virion release in extracellular space, gets dissociated from E dimers. In terms of biological role, acts as a chaperone for envelope protein E during intracellular virion assembly by masking and inactivating envelope protein E fusion peptide. prM is the only viral peptide matured by host furin in the trans-Golgi network probably to avoid catastrophic activation of the viral fusion activity in acidic Golgi compartment prior to virion release. prM-E cleavage is inefficient, and many virions are only partially matured. These uncleaved prM would play a role in immune evasion. May play a role in virus budding. Exerts cytotoxic effects by activating a mitochondrial apoptotic pathway through M ectodomain. May display a viroporin activity. Functionally, binds to host cell surface receptor and mediates fusion between viral and cellular membranes. Envelope protein is synthesized in the endoplasmic reticulum in the form of heterodimer with protein prM. They play a role in virion budding in the ER, and the newly formed immature particle is covered with 60 spikes composed of heterodimer between precursor prM and envelope protein E. The virion is transported to the Golgi apparatus where the low pH causes dissociation of PrM-E heterodimers and formation of E homodimers. prM-E cleavage is inefficient, and many virions are only partially matured. These uncleaved prM would play a role in immune evasion. Its function is as follows. Involved in immune evasion, pathogenesis and viral replication. Once cleaved off the polyprotein, is targeted to three destinations: the viral replication cycle, the plasma membrane and the extracellular compartment. Essential for viral replication. Required for formation of the replication complex and recruitment of other non-structural proteins to the ER-derived membrane structures. Excreted as a hexameric lipoparticle that plays a role against host immune response. Antagonizing the complement function. Binds to the host macrophages and dendritic cells. Inhibits signal transduction originating from Toll-like receptor 3 (TLR3). In terms of biological role, component of the viral RNA replication complex that functions in virion assembly and antagonizes the host immune response. Required cofactor for the serine protease function of NS3. May have membrane-destabilizing activity and form viroporins. Functionally, displays three enzymatic activities: serine protease, NTPase and RNA helicase. NS3 serine protease, in association with NS2B, performs its autocleavage and cleaves the polyprotein at dibasic sites in the cytoplasm: C-prM, NS2A-NS2B, NS2B-NS3, NS3-NS4A, NS4A-2K and NS4B-NS5. NS3 RNA helicase binds RNA and unwinds dsRNA in the 3' to 5' direction. Also plays a role in virus assembly. Its function is as follows. Regulates the ATPase activity of the NS3 helicase activity. NS4A allows NS3 helicase to conserve energy during unwinding. In terms of biological role, functions as a signal peptide for NS4B and is required for the interferon antagonism activity of the latter. Induces the formation of ER-derived membrane vesicles where the viral replication takes place. Inhibits interferon (IFN)-induced host STAT1 phosphorylation and nuclear translocation, thereby preventing the establishment of cellular antiviral state by blocking the IFN-alpha/beta pathway. Functionally, replicates the viral (+) and (-) RNA genome, and performs the capping of genomes in the cytoplasm. NS5 methylates viral RNA cap at guanine N-7 and ribose 2'-O positions. Besides its role in RNA genome replication, also prevents the establishment of cellular antiviral state by blocking the interferon-alpha/beta (IFN-alpha/beta) signaling pathway. IFN-I induces binding of NS5 to host IFN-activated transcription factor STAT2, preventing its transcriptional activity. Host TRIM23 is the E3 ligase that interacts with and polyubiquitinates NS5 to promote its binding to STAT2 and trigger IFN-I signaling inhibition. The polypeptide is Genome polyprotein (Banzi virus (BANV)).